Consider the following 367-residue polypeptide: Histidinol-phosphate aminotransferase 1 (367 aa).

N6-(pyridoxal phosphate)lysine is present on K229.

This sequence belongs to the class-II pyridoxal-phosphate-dependent aminotransferase family. Histidinol-phosphate aminotransferase subfamily. In terms of assembly, homodimer. Requires pyridoxal 5'-phosphate as cofactor.

The enzyme catalyses L-histidinol phosphate + 2-oxoglutarate = 3-(imidazol-4-yl)-2-oxopropyl phosphate + L-glutamate. The protein operates within amino-acid biosynthesis; L-histidine biosynthesis; L-histidine from 5-phospho-alpha-D-ribose 1-diphosphate: step 7/9. The polypeptide is Histidinol-phosphate aminotransferase 1 (Idiomarina loihiensis (strain ATCC BAA-735 / DSM 15497 / L2-TR)).